We begin with the raw amino-acid sequence, 275 residues long: Large ribosomal subunit protein uL2 (275 aa).

The interval 223-275 is disordered; the sequence is VAMNPIDHPHGGGEGRTSGGRHPVSPWGVPTKGYKTRSNKRTDKYIVRRRNKK.

Belongs to the universal ribosomal protein uL2 family. Part of the 50S ribosomal subunit. Forms a bridge to the 30S subunit in the 70S ribosome.

Its function is as follows. One of the primary rRNA binding proteins. Required for association of the 30S and 50S subunits to form the 70S ribosome, for tRNA binding and peptide bond formation. It has been suggested to have peptidyltransferase activity; this is somewhat controversial. Makes several contacts with the 16S rRNA in the 70S ribosome. This is Large ribosomal subunit protein uL2 from Shewanella woodyi (strain ATCC 51908 / MS32).